The chain runs to 70 residues: DNA-directed RNA polymerase subunit epsilon (70 aa).

The protein belongs to the RNA polymerase subunit epsilon family. In terms of assembly, RNAP is composed of a core of 2 alpha, a beta and a beta' subunit. The core is associated with a delta subunit, and at least one of epsilon or omega. When a sigma factor is associated with the core the holoenzyme is formed, which can initiate transcription.

The enzyme catalyses RNA(n) + a ribonucleoside 5'-triphosphate = RNA(n+1) + diphosphate. A non-essential component of RNA polymerase (RNAP). The protein is DNA-directed RNA polymerase subunit epsilon of Bacillus cereus (strain ATCC 14579 / DSM 31 / CCUG 7414 / JCM 2152 / NBRC 15305 / NCIMB 9373 / NCTC 2599 / NRRL B-3711).